Here is a 155-residue protein sequence, read N- to C-terminus: Transcription antitermination protein NusB (155 aa).

It belongs to the NusB family.

Functionally, involved in transcription antitermination. Required for transcription of ribosomal RNA (rRNA) genes. Binds specifically to the boxA antiterminator sequence of the ribosomal RNA (rrn) operons. The polypeptide is Transcription antitermination protein NusB (Vibrio campbellii (strain ATCC BAA-1116)).